The chain runs to 80 residues: Trefoil factor 3 (80 aa).

The signal sequence occupies residues 1–21 (MAARALCMLGLVLALLSSSSA). Positions 30–73 (NQCAVPAKDRVDCGYPHVTPKECNNRGCCFDSRIPGVPWCFKPL) constitute a P-type domain. 3 cysteine pairs are disulfide-bonded: Cys-32-Cys-58, Cys-42-Cys-57, and Cys-52-Cys-69.

In terms of assembly, monomer. Homodimer; disulfide-linked. Expressed in goblet cells of the intestines and colon (at protein level). Expressed by goblet cells of small and large intestinal epithelia and also by the uterus. Also expressed in the hypothalamus where it is detected in paraventricular, periventricular and supraoptic nuclei (at protein level).

It localises to the secreted. The protein resides in the extracellular space. Its subcellular location is the extracellular matrix. It is found in the cytoplasm. Functionally, involved in the maintenance and repair of the intestinal mucosa. Promotes the mobility of epithelial cells in healing processes (motogen). The chain is Trefoil factor 3 (TFF3) from Homo sapiens (Human).